A 331-amino-acid chain; its full sequence is Ribosomal large subunit pseudouridine synthase D (331 aa).

In terms of domain architecture, S4 RNA-binding spans 25–97 (RRFDAVLAEL…IPLDILYEDE (73 aa)). Residue Asp145 is part of the active site.

This sequence belongs to the pseudouridine synthase RluA family.

Its subcellular location is the cytoplasm. The catalysed reaction is uridine(1911/1915/1917) in 23S rRNA = pseudouridine(1911/1915/1917) in 23S rRNA. Responsible for synthesis of pseudouridine from uracil at positions 1911, 1915 and 1917 in 23S ribosomal RNA. The sequence is that of Ribosomal large subunit pseudouridine synthase D (rluD) from Xylella fastidiosa (strain Temecula1 / ATCC 700964).